Reading from the N-terminus, the 546-residue chain is Glutathione synthetase, chloroplastic (546 aa).

The transit peptide at 1-63 directs the protein to the chloroplast; the sequence is MGSGCSSPSI…SPLKCAKVPE (63 aa). R200 is a binding site for substrate. E216 contacts ATP. Mg(2+) contacts are provided by E216 and N218. Residues 220 to 223, 288 to 290, Q294, and 342 to 345 each bind substrate; these read ISSS, ERN, and RAGY. ATP contacts are provided by residues K381, 435 to 444, Y446, 471 to 474, and E497; these read KPQREGGGNN and MQRI. Mg(2+) is bound at residue E439. A substrate-binding site is contributed by R522. 2 residues coordinate ATP: K524 and E530. A substrate-binding site is contributed by 533 to 534; that stretch reads VA.

This sequence belongs to the eukaryotic GSH synthase family. Homodimer. Requires Mg(2+) as cofactor.

The protein resides in the plastid. It localises to the chloroplast. It carries out the reaction gamma-L-glutamyl-L-cysteine + glycine + ATP = glutathione + ADP + phosphate + H(+). Its pathway is sulfur metabolism; glutathione biosynthesis; glutathione from L-cysteine and L-glutamate: step 2/2. This chain is Glutathione synthetase, chloroplastic (GSH2), found in Solanum lycopersicum (Tomato).